A 224-amino-acid polypeptide reads, in one-letter code: uncharacterized protein (224 aa).

This is an uncharacterized protein from Listeria monocytogenes serovar 1/2a (strain ATCC BAA-679 / EGD-e).